A 171-amino-acid chain; its full sequence is Large ribosomal subunit protein bL9 (171 aa).

It belongs to the bacterial ribosomal protein bL9 family.

In terms of biological role, binds to the 23S rRNA. This chain is Large ribosomal subunit protein bL9, found in Rickettsia akari (strain Hartford).